The chain runs to 31 residues: Cytochrome b6-f complex subunit 6 (31 aa).

A helical transmembrane segment spans residues 4 to 26; it reads LTSYFGFLLAALTITSALFIGLN.

Belongs to the PetL family. In terms of assembly, the 4 large subunits of the cytochrome b6-f complex are cytochrome b6, subunit IV (17 kDa polypeptide, PetD), cytochrome f and the Rieske protein, while the 4 small subunits are PetG, PetL, PetM and PetN. The complex functions as a dimer.

It is found in the plastid. The protein localises to the chloroplast thylakoid membrane. In terms of biological role, component of the cytochrome b6-f complex, which mediates electron transfer between photosystem II (PSII) and photosystem I (PSI), cyclic electron flow around PSI, and state transitions. PetL is important for photoautotrophic growth as well as for electron transfer efficiency and stability of the cytochrome b6-f complex. In Amaranthus caudatus (Love-lies-bleeding), this protein is Cytochrome b6-f complex subunit 6.